The following is a 307-amino-acid chain: Nicotinamide/nicotinic acid mononucleotide adenylyltransferase 2 (307 aa).

2 residues coordinate NAD(+): serine 16 and phenylalanine 17. Histidine 24 provides a ligand contact to ATP. Tryptophan 92 and threonine 95 together coordinate NAD(+). S-palmitoyl cysteine attachment occurs at residues cysteine 164 and cysteine 165. NAD(+)-binding residues include glycine 200, aspartate 202, leucine 212, tryptophan 213, and arginine 232. ATP is bound at residue 271-274 (TKSR).

Belongs to the eukaryotic NMN adenylyltransferase family. As to quaternary structure, monomer. Mg(2+) serves as cofactor. Degraded in response to injured neurite. Degradation is caused by polyubiquitination by MYCBP2 after recognition by FBXO45. In terms of processing, palmitoylated; palmitoylation is required for membrane association.

It is found in the golgi apparatus membrane. It localises to the cytoplasmic vesicle membrane. Its subcellular location is the cytoplasm. The protein localises to the cell projection. The protein resides in the axon. It carries out the reaction beta-nicotinamide D-ribonucleotide + ATP + H(+) = diphosphate + NAD(+). The catalysed reaction is nicotinate beta-D-ribonucleotide + ATP + H(+) = deamido-NAD(+) + diphosphate. It participates in cofactor biosynthesis; NAD(+) biosynthesis; NAD(+) from nicotinamide D-ribonucleotide: step 1/1. The protein operates within cofactor biosynthesis; NAD(+) biosynthesis; deamido-NAD(+) from nicotinate D-ribonucleotide: step 1/1. With respect to regulation, inhibited by P1-(adenosine-5')-P3-(nicotinamide-riboside-5')-triphosphate (Np3AD) and P1-(adenosine-5')-P4-(nicotinamide-riboside-5')-tetraphosphate (Np4AD). In terms of biological role, nicotinamide/nicotinate-nucleotide adenylyltransferase that acts as an axon maintenance factor. Axon survival factor required for the maintenance of healthy axons: acts by delaying Wallerian axon degeneration, an evolutionarily conserved process that drives the loss of damaged axons. Catalyzes the formation of NAD(+) from nicotinamide mononucleotide (NMN) and ATP. Can also use the deamidated form; nicotinic acid mononucleotide (NaMN) as substrate but with a lower efficiency. Cannot use triazofurin monophosphate (TrMP) as substrate. Also catalyzes the reverse reaction, i.e. the pyrophosphorolytic cleavage of NAD(+). For the pyrophosphorolytic activity prefers NAD(+), NADH and NaAD as substrates and degrades nicotinic acid adenine dinucleotide phosphate (NHD) less effectively. Fails to cleave phosphorylated dinucleotides NADP(+), NADPH and NaADP(+). Also acts as an activator of ADP-ribosylation by supporting the catalytic activity of PARP16 and promoting mono-ADP-ribosylation of ribosomes by PARP16. May be involved in the maintenance of axonal integrity. This chain is Nicotinamide/nicotinic acid mononucleotide adenylyltransferase 2 (NMNAT2), found in Bos taurus (Bovine).